A 561-amino-acid polypeptide reads, in one-letter code: Potassium-transporting ATPase potassium-binding subunit (561 aa).

The next 12 membrane-spanning stretches (helical) occupy residues 1–21 (MMAS…LLAR), 62–82 (YLLA…LILM), 132–152 (GLTV…FALM), 173–193 (ITLY…VSQG), 253–273 (FVQM…FGDV), 283–303 (LLWS…WAEV), 327–347 (FGIL…CGAV), 356–376 (ALGG…FGGV), 379–399 (GLYG…LMIG), 416–436 (MTAL…ALAM), 483–503 (MLLA…VLAI), and 526–546 (LFIA…FIPA).

The protein belongs to the KdpA family. In terms of assembly, the system is composed of three essential subunits: KdpA, KdpB and KdpC.

Its subcellular location is the cell inner membrane. In terms of biological role, part of the high-affinity ATP-driven potassium transport (or Kdp) system, which catalyzes the hydrolysis of ATP coupled with the electrogenic transport of potassium into the cytoplasm. This subunit binds the periplasmic potassium ions and delivers the ions to the membrane domain of KdpB through an intramembrane tunnel. In Erwinia tasmaniensis (strain DSM 17950 / CFBP 7177 / CIP 109463 / NCPPB 4357 / Et1/99), this protein is Potassium-transporting ATPase potassium-binding subunit.